The primary structure comprises 594 residues: Spindle pole body-associated protein CIK1 (594 aa).

The disordered stretch occupies residues 1–29; that stretch reads MNNSKIPKLSFHSDPNNVTRDFPKTKRQK. Positions 81–360 form a coiled coil; that stretch reads IERVKNNERK…VNELEKVQQE (280 aa).

Interacts with KAR3; the interaction is direct.

Its subcellular location is the nucleus. The protein localises to the cytoplasm. It localises to the cytoskeleton. It is found in the microtubule organizing center. The protein resides in the spindle pole body. Its subcellular location is the spindle. Its function is as follows. Together with the minus end-directed microtubule motor KAR3, involved in spindle midzone assembly, karyogamy (nuclear fusion) during mating, and with an essential function in meiosis I. To contribute to spindle midzone assembly during mitotic metaphase, the KAR3-CIK1 motor cross-links anti-parallel microtubules to align them on the spindle axis; as the motor travels polewards splayed microtubules are pulled into alignment. During the karyogamy (nuclear fusion) step of mating, KAR3-CIK1 cross-links antiparallel cytoplasmic microtubules emanating from the spindle pole bodies of mating partners; the motor activity of KAR3 creates the force that pulls the nuclei together by sliding cross-linked microtubules past one another. KAR3-CIK1 promotes microtubule shortening predominantly from the microtubule plus-end. Required for interhomolog recombination, synapsis of homologous chromosomes and establishment of a meiosis I spindle. This Saccharomyces cerevisiae (strain ATCC 204508 / S288c) (Baker's yeast) protein is Spindle pole body-associated protein CIK1 (CIK1).